A 235-amino-acid chain; its full sequence is Small ribosomal subunit protein eS4 (235 aa).

An S4 RNA-binding domain is found at 37–110; it reads LPLGLIIRDV…KGRLVLYKLN (74 aa).

The protein belongs to the eukaryotic ribosomal protein eS4 family.

The protein is Small ribosomal subunit protein eS4 of Methanosarcina mazei (strain ATCC BAA-159 / DSM 3647 / Goe1 / Go1 / JCM 11833 / OCM 88) (Methanosarcina frisia).